We begin with the raw amino-acid sequence, 457 residues long: Endo-1,3(4)-beta-glucanase ARB_04519 (457 aa).

The first 18 residues, 1–18 (MRTTGLLLLGALAELGSA), serve as a signal peptide directing secretion. The region spanning 19–319 (TYILEDDYQP…YMKVYQQGTA (301 aa)) is the GH16 domain. Glutamate 130 serves as the catalytic Nucleophile. The active-site Proton donor is glutamate 135. An N-linked (GlcNAc...) asparagine glycan is attached at asparagine 200. The interval 318-397 (TAPTKPSQAP…DSCPPPTQPA (80 aa)) is disordered. The segment covering 333 to 352 (TPALPTMKSTSTVSSMVSAT) has biased composition (low complexity). The span at 353-362 (QPAPTASNPT) shows a compositional bias: polar residues. Positions 368–378 (PSSSSSNNGPQ) are enriched in low complexity.

This sequence belongs to the glycosyl hydrolase 16 family.

It localises to the secreted. The catalysed reaction is Endohydrolysis of (1-&gt;3)- or (1-&gt;4)-linkages in beta-D-glucans when the glucose residue whose reducing group is involved in the linkage to be hydrolyzed is itself substituted at C-3.. Functionally, mixed-linked glucanase involved in the degradation of complex natural cellulosic substrates. Active on laminarin. lichenan, soluble carboxymethyl cellulose but not on pustulan. In Arthroderma benhamiae (strain ATCC MYA-4681 / CBS 112371) (Trichophyton mentagrophytes), this protein is Endo-1,3(4)-beta-glucanase ARB_04519.